A 328-amino-acid polypeptide reads, in one-letter code: Malate dehydrogenase (328 aa).

G12–A18 is an NAD(+) binding site. The substrate site is built by R93 and R99. Residues N106, Q113, and V130–N132 contribute to the NAD(+) site. Substrate-binding residues include N132 and R163. Catalysis depends on H188, which acts as the Proton acceptor.

It belongs to the LDH/MDH superfamily. MDH type 2 family.

It catalyses the reaction (S)-malate + NAD(+) = oxaloacetate + NADH + H(+). Its function is as follows. Catalyzes the reversible oxidation of malate to oxaloacetate. This Burkholderia ambifaria (strain ATCC BAA-244 / DSM 16087 / CCUG 44356 / LMG 19182 / AMMD) (Burkholderia cepacia (strain AMMD)) protein is Malate dehydrogenase.